The following is a 457-amino-acid chain: Chromosomal replication initiator protein DnaA (457 aa).

Positions 1–77 (MDTNNNIEKE…EILSQNKVGM (77 aa)) are domain I, interacts with DnaA modulators. The segment at 77-108 (MHLAHSVDVRIEVAPKIQVNAQSNINYKATKT) is domain II. The tract at residues 109 to 323 (SVKDSYTFEN…GAIIKISVNA (215 aa)) is domain III, AAA+ region. ATP-binding residues include G153, G155, K156, and T157. The segment at 324–457 (NLMNATIDLN…DKKTAFNSSE (134 aa)) is domain IV, binds dsDNA.

It belongs to the DnaA family. In terms of assembly, oligomerizes as a right-handed, spiral filament on DNA at oriC.

Its subcellular location is the cytoplasm. Functionally, plays an essential role in the initiation and regulation of chromosomal replication. ATP-DnaA binds to the origin of replication (oriC) to initiate formation of the DNA replication initiation complex once per cell cycle. Binds the DnaA box (a 9 base pair repeat at the origin) and separates the double-stranded (ds)DNA. Forms a right-handed helical filament on oriC DNA; dsDNA binds to the exterior of the filament while single-stranded (ss)DNA is stabiized in the filament's interior. The ATP-DnaA-oriC complex binds and stabilizes one strand of the AT-rich DNA unwinding element (DUE), permitting loading of DNA polymerase. After initiation quickly degrades to an ADP-DnaA complex that is not apt for DNA replication. Binds acidic phospholipids. The chain is Chromosomal replication initiator protein DnaA from Helicobacter pylori (strain J99 / ATCC 700824) (Campylobacter pylori J99).